We begin with the raw amino-acid sequence, 342 residues long: D-erythrose-4-phosphate dehydrogenase (342 aa).

An NAD(+)-binding site is contributed by arginine 12 to isoleucine 13. Residues serine 154 to threonine 156, arginine 200, threonine 213 to lysine 214, and arginine 236 contribute to the substrate site. The active-site Nucleophile is the cysteine 155. NAD(+) is bound at residue asparagine 318.

This sequence belongs to the glyceraldehyde-3-phosphate dehydrogenase family. Epd subfamily. As to quaternary structure, homotetramer.

Its subcellular location is the cytoplasm. The enzyme catalyses D-erythrose 4-phosphate + NAD(+) + H2O = 4-phospho-D-erythronate + NADH + 2 H(+). Its pathway is cofactor biosynthesis; pyridoxine 5'-phosphate biosynthesis; pyridoxine 5'-phosphate from D-erythrose 4-phosphate: step 1/5. In terms of biological role, catalyzes the NAD-dependent conversion of D-erythrose 4-phosphate to 4-phosphoerythronate. This is D-erythrose-4-phosphate dehydrogenase from Klebsiella pneumoniae subsp. pneumoniae (strain ATCC 700721 / MGH 78578).